The sequence spans 758 residues: 5-methyltetrahydropteroyltriglutamate--homocysteine methyltransferase (758 aa).

Residues 16–19 and Lys-116 each bind 5-methyltetrahydropteroyltri-L-glutamate; that span reads RELK. Residues 436-438 and Glu-489 contribute to the L-homocysteine site; that span reads IGS. L-methionine contacts are provided by residues 436 to 438 and Glu-489; that span reads IGS. Residues 520–521 and Trp-566 each bind 5-methyltetrahydropteroyltri-L-glutamate; that span reads RC. L-homocysteine is bound at residue Asp-604. Asp-604 contacts L-methionine. Position 610 (Glu-610) interacts with 5-methyltetrahydropteroyltri-L-glutamate. Zn(2+)-binding residues include His-646, Cys-648, and Glu-670. Residue His-699 is the Proton donor of the active site. Zn(2+) is bound at residue Cys-731.

It belongs to the vitamin-B12 independent methionine synthase family. It depends on Zn(2+) as a cofactor.

The enzyme catalyses 5-methyltetrahydropteroyltri-L-glutamate + L-homocysteine = tetrahydropteroyltri-L-glutamate + L-methionine. The protein operates within amino-acid biosynthesis; L-methionine biosynthesis via de novo pathway; L-methionine from L-homocysteine (MetE route): step 1/1. Its function is as follows. Catalyzes the transfer of a methyl group from 5-methyltetrahydrofolate to homocysteine resulting in methionine formation. In Nitrosococcus oceani (strain ATCC 19707 / BCRC 17464 / JCM 30415 / NCIMB 11848 / C-107), this protein is 5-methyltetrahydropteroyltriglutamate--homocysteine methyltransferase.